The primary structure comprises 745 residues: Probable copper-transporting ATPase PacS (745 aa).

Residues 1-94 (MAQTINLQLE…PVFSAKLVTG (94 aa)) are Cytoplasmic-facing. An HMA domain is found at 3–68 (QTINLQLEGM…AVERAGYHAR (66 aa)). A metal cation-binding residues include C14 and C17. A helical transmembrane segment spans residues 95 to 115 (LVISAVLFFGSLPMMLGVNIP). The Extracellular portion of the chain corresponds to 116 to 125 (HFPHIFHDPW). A helical transmembrane segment spans residues 126-145 (LQWLLATPVQFWSGAEFYRG). The Cytoplasmic segment spans residues 146 to 152 (AWKSVRT). A helical membrane pass occupies residues 153 to 173 (RSATMDTLVALGTSAAYFYSV). Over 174 to 193 (AITLFPQWLTSQGLAAHVYF) the chain is Extracellular. The chain crosses the membrane as a helical span at residues 194–214 (EAAAVVITLILLGRSLEQRAR). Topologically, residues 215–342 (RETSAAIRKL…KAPIQHFVDR (128 aa)) are cytoplasmic. Residues 343-365 (ITHWFVPTVIVVAIAAFCIWWLT) form a helical membrane-spanning segment. Over 366 to 372 (TGNITLA) the chain is Extracellular. The chain crosses the membrane as a helical span at residues 373 to 390 (VLTLVEVLIIACPCALGL). At 391–543 (ATPTSVMVGT…QAQQWEKEQK (153 aa)) the chain is on the cytoplasmic side. The active-site 4-aspartylphosphate intermediate is D428. The helical transmembrane segment at 544-564 (TVIWLAVDTEVKALLAIADAI) threads the bilayer. Residues 565-687 (KPSSPQVVQA…KLSRATMGNI (123 aa)) are Extracellular-facing. Residues D633 and D637 each contribute to the Mg(2+) site. The chain crosses the membrane as a helical span at residues 688–707 (RQNLFFAFIYNVIGIPVAAG). Over 708-719 (LFYPLFGLLLNP) the chain is Cytoplasmic. A helical membrane pass occupies residues 720-738 (ILAGAAMAFSSVSVVTNAL). Residues 739 to 745 (RLKKFCP) lie on the Extracellular side of the membrane.

The protein belongs to the cation transport ATPase (P-type) (TC 3.A.3) family. Type IB subfamily.

The protein resides in the cell membrane. It catalyses the reaction Cu(+)(in) + ATP + H2O = Cu(+)(out) + ADP + phosphate + H(+). May play a role in the osmotic adaptation. The sequence is that of Probable copper-transporting ATPase PacS (pacS) from Synechocystis sp. (strain ATCC 27184 / PCC 6803 / Kazusa).